Consider the following 64-residue polypeptide: Large ribosomal subunit protein bL28 (64 aa).

It belongs to the bacterial ribosomal protein bL28 family.

The polypeptide is Large ribosomal subunit protein bL28 (Bifidobacterium longum (strain NCC 2705)).